Reading from the N-terminus, the 210-residue chain is Methylthioribulose-1-phosphate dehydratase (210 aa).

Positions 94 and 96 each coordinate Zn(2+).

The protein belongs to the aldolase class II family. MtnB subfamily. Zn(2+) serves as cofactor.

It catalyses the reaction 5-(methylsulfanyl)-D-ribulose 1-phosphate = 5-methylsulfanyl-2,3-dioxopentyl phosphate + H2O. It functions in the pathway amino-acid biosynthesis; L-methionine biosynthesis via salvage pathway; L-methionine from S-methyl-5-thio-alpha-D-ribose 1-phosphate: step 2/6. Its function is as follows. Catalyzes the dehydration of methylthioribulose-1-phosphate (MTRu-1-P) into 2,3-diketo-5-methylthiopentyl-1-phosphate (DK-MTP-1-P). The polypeptide is Methylthioribulose-1-phosphate dehydratase (Yersinia enterocolitica serotype O:8 / biotype 1B (strain NCTC 13174 / 8081)).